The primary structure comprises 278 residues: Diaminopimelate epimerase (278 aa).

Substrate-binding residues include N11 and N75. C84 acts as the Proton donor in catalysis. Residues 85–86, N160, N195, and 213–214 each bind substrate; these read GN and ER. The active-site Proton acceptor is C222. A substrate-binding site is contributed by 223 to 224; sequence GT.

It belongs to the diaminopimelate epimerase family. In terms of assembly, homodimer.

It is found in the cytoplasm. It catalyses the reaction (2S,6S)-2,6-diaminopimelate = meso-2,6-diaminopimelate. It participates in amino-acid biosynthesis; L-lysine biosynthesis via DAP pathway; DL-2,6-diaminopimelate from LL-2,6-diaminopimelate: step 1/1. In terms of biological role, catalyzes the stereoinversion of LL-2,6-diaminopimelate (L,L-DAP) to meso-diaminopimelate (meso-DAP), a precursor of L-lysine and an essential component of the bacterial peptidoglycan. The chain is Diaminopimelate epimerase from Corynebacterium aurimucosum (strain ATCC 700975 / DSM 44827 / CIP 107346 / CN-1) (Corynebacterium nigricans).